Here is a 124-residue protein sequence, read N- to C-terminus: Probable dihydroneopterin aldolase (124 aa).

Residues glutamate 23, tyrosine 56, and 75–76 (IE) each bind substrate. The active-site Proton donor/acceptor is the lysine 103.

This sequence belongs to the DHNA family.

It catalyses the reaction 7,8-dihydroneopterin = 6-hydroxymethyl-7,8-dihydropterin + glycolaldehyde. Its pathway is cofactor biosynthesis; tetrahydrofolate biosynthesis; 2-amino-4-hydroxy-6-hydroxymethyl-7,8-dihydropteridine diphosphate from 7,8-dihydroneopterin triphosphate: step 3/4. In terms of biological role, catalyzes the conversion of 7,8-dihydroneopterin to 6-hydroxymethyl-7,8-dihydropterin. In Chlamydia trachomatis serovar D (strain ATCC VR-885 / DSM 19411 / UW-3/Cx), this protein is Probable dihydroneopterin aldolase (folB).